A 210-amino-acid polypeptide reads, in one-letter code: dITP/XTP pyrophosphatase (210 aa).

19 to 24 (SNNPGK) contacts substrate. The Mg(2+) site is built by Asp-51 and Asp-80. Asp-80 serves as the catalytic Proton acceptor. Substrate is bound by residues Ser-81, 166–169 (FGYD), Lys-189, and 194–195 (HR).

This sequence belongs to the HAM1 NTPase family. As to quaternary structure, homodimer. It depends on Mg(2+) as a cofactor.

The enzyme catalyses XTP + H2O = XMP + diphosphate + H(+). It catalyses the reaction dITP + H2O = dIMP + diphosphate + H(+). It carries out the reaction ITP + H2O = IMP + diphosphate + H(+). Functionally, pyrophosphatase that catalyzes the hydrolysis of nucleoside triphosphates to their monophosphate derivatives, with a high preference for the non-canonical purine nucleotides XTP (xanthosine triphosphate), dITP (deoxyinosine triphosphate) and ITP. Seems to function as a house-cleaning enzyme that removes non-canonical purine nucleotides from the nucleotide pool, thus preventing their incorporation into DNA/RNA and avoiding chromosomal lesions. The chain is dITP/XTP pyrophosphatase from Burkholderia mallei (strain ATCC 23344).